The sequence spans 222 residues: Ribosomal RNA small subunit methyltransferase G (222 aa).

S-adenosyl-L-methionine is bound by residues Gly-82, Leu-87, 132 to 133 (AE), and Arg-150.

It belongs to the methyltransferase superfamily. RNA methyltransferase RsmG family.

Its subcellular location is the cytoplasm. In terms of biological role, specifically methylates the N7 position of guanine in position 518 of 16S rRNA. The protein is Ribosomal RNA small subunit methyltransferase G of Corynebacterium jeikeium (strain K411).